A 248-amino-acid polypeptide reads, in one-letter code: Triosephosphate isomerase (248 aa).

Substrate is bound at residue 9–11 (NWK). His94 acts as the Electrophile in catalysis. Catalysis depends on Glu166, which acts as the Proton acceptor. Residues Gly172, Ser211, and 232 to 233 (GG) each bind substrate.

This sequence belongs to the triosephosphate isomerase family. In terms of assembly, homodimer.

It localises to the cytoplasm. It catalyses the reaction D-glyceraldehyde 3-phosphate = dihydroxyacetone phosphate. It functions in the pathway carbohydrate biosynthesis; gluconeogenesis. Its pathway is carbohydrate degradation; glycolysis; D-glyceraldehyde 3-phosphate from glycerone phosphate: step 1/1. In terms of biological role, involved in the gluconeogenesis. Catalyzes stereospecifically the conversion of dihydroxyacetone phosphate (DHAP) to D-glyceraldehyde-3-phosphate (G3P). The polypeptide is Triosephosphate isomerase (Ruthia magnifica subsp. Calyptogena magnifica).